The sequence spans 441 residues: Arginine biosynthesis bifunctional protein ArgJ, mitochondrial (441 aa).

Thr177, Lys203, Thr214, Glu303, Asn436, and Ser441 together coordinate substrate. The active-site Nucleophile is the Thr214.

The protein belongs to the ArgJ family. As to quaternary structure, heterodimer of an alpha and a beta chain. In terms of processing, the alpha and beta chains are autoproteolytically processed from a single precursor protein within the mitochondrion.

The protein localises to the mitochondrion matrix. The enzyme catalyses N(2)-acetyl-L-ornithine + L-glutamate = N-acetyl-L-glutamate + L-ornithine. It carries out the reaction L-glutamate + acetyl-CoA = N-acetyl-L-glutamate + CoA + H(+). The protein operates within amino-acid biosynthesis; L-arginine biosynthesis; L-ornithine and N-acetyl-L-glutamate from L-glutamate and N(2)-acetyl-L-ornithine (cyclic): step 1/1. It participates in amino-acid biosynthesis; L-arginine biosynthesis; N(2)-acetyl-L-ornithine from L-glutamate: step 1/4. Functionally, catalyzes two activities which are involved in the cyclic version of arginine biosynthesis: the synthesis of acetylglutamate from glutamate and acetyl-CoA, and of ornithine by transacetylation between acetylornithine and glutamate. This Debaryomyces hansenii (strain ATCC 36239 / CBS 767 / BCRC 21394 / JCM 1990 / NBRC 0083 / IGC 2968) (Yeast) protein is Arginine biosynthesis bifunctional protein ArgJ, mitochondrial.